A 673-amino-acid polypeptide reads, in one-letter code: Paralemmin-3 (673 aa).

Coiled coils occupy residues 4–49 (SSLY…LRER) and 75–101 (GQAQARIRNLEDSLFTLQSQLQLLQSA). Disordered regions lie at residues 49–78 (RWLMDGAAAVPEPSEDPTSKDPQSPEGQAQ) and 99–213 (QSAS…GEAK). The span at 123–137 (LSQSIVEAGSVGQTD) shows a compositional bias: polar residues. Phosphoserine is present on residues S124 and S143. Position 151 is a phosphothreonine (T151). Residues S155, S157, and S260 each carry the phosphoserine modification. 2 disordered regions span residues 295 to 343 (VPEV…SFIW) and 356 to 673 (LLVE…CAVM). A Phosphothreonine modification is found at T301. At S325 the chain carries Phosphoserine. Residues 327 to 338 (EGDGQGGSGGEE) are compositionally biased toward gly residues. Residues S375 and S420 each carry the phosphoserine modification. 2 stretches are compositionally biased toward basic and acidic residues: residues 392-477 (EAEK…KRGA) and 487-532 (GVEK…EKTQ). S544 and S660 each carry phosphoserine. Residues C667 and C669 are each lipidated (S-palmitoyl cysteine). C670 is modified (cysteine methyl ester). C670 carries S-farnesyl cysteine lipidation. Residues 671–673 (AVM) constitute a propeptide, removed in mature form.

The protein belongs to the paralemmin family. In terms of assembly, interacts with SIGIRR. Palmitoylated on Cys-667 and Cys-669 and prenylated on Cys-670; which is required for membrane association.

It is found in the cytoplasm. It localises to the cell membrane. Functionally, ATP-binding protein, which may act as a adapter in the Toll-like receptor (TLR) signaling. This chain is Paralemmin-3 (PALM3), found in Homo sapiens (Human).